Here is a 524-residue protein sequence, read N- to C-terminus: Probable myosin-binding protein 5 (524 aa).

Residues 20-40 (FLIYALLEWILIIILFIDGFL) traverse the membrane as a helical segment. The region spanning 299–397 (SILQHLNRQV…ELEAGIEVYR (99 aa)) is the GTD-binding domain. Residues 462-490 (SRKDMLVKEISEITERLNAIESKGELLQQ) adopt a coiled-coil conformation.

The protein resides in the membrane. Probable membrane-anchored myosin receptors. This is Probable myosin-binding protein 5 from Arabidopsis thaliana (Mouse-ear cress).